The primary structure comprises 1356 residues: DNA-directed RNA polymerase subunit beta (1356 aa).

Belongs to the RNA polymerase beta chain family. The RNAP catalytic core consists of 2 alpha, 1 beta, 1 beta' and 1 omega subunit. When a sigma factor is associated with the core the holoenzyme is formed, which can initiate transcription.

The enzyme catalyses RNA(n) + a ribonucleoside 5'-triphosphate = RNA(n+1) + diphosphate. Functionally, DNA-dependent RNA polymerase catalyzes the transcription of DNA into RNA using the four ribonucleoside triphosphates as substrates. This chain is DNA-directed RNA polymerase subunit beta, found in Phenylobacterium zucineum (strain HLK1).